Here is a 595-residue protein sequence, read N- to C-terminus: Estrogen receptor (595 aa).

The interval 1 to 184 is modulating(transactivation AF-1); mediates interaction with MACROD1; the sequence is MTMTLHTKAS…AMESVKETRY (184 aa). O-linked (GlcNAc) serine glycosylation is present at S10. Residues 35–47 are required for interaction with NCOA1; that stretch reads LERALSEVYVDSS. An interaction with DDX5; self-association region spans residues 35-174; that stretch reads LERALSEVYV…LSSSSEKGSM (140 aa). Phosphoserine; by CDK2 occurs at positions 103 and 105. S118 carries the phosphoserine modification. Residues 143–174 form a disordered region; that stretch reads DSGPPAFYRSNSDNRRQSGRERLSSSSEKGSM. Over residues 154–165 the composition is skewed to basic and acidic residues; sequence SDNRRQSGRERL. At S167 the chain carries Phosphoserine; by CK2. 2 NR C4-type zinc fingers span residues 185 to 205 and 221 to 245; these read CAVC…CEGC and CPAT…LRKC. The segment at residues 185 to 250 is a DNA-binding region (nuclear receptor); that stretch reads CAVCNDYASG…RLRKCYEVGM (66 aa). Residues 185–310 are mediates interaction with DNTTIP2; the sequence is CAVCNDYASG…TKKNSPALSL (126 aa). The segment at 251–310 is hinge; the sequence is MKGGIRKDRRGGRMLKHKRQRDDLEGRNDMGPSGDMRATNLWPSPLVIKHTKKNSPALSL. R260 carries the asymmetric dimethylarginine; by PRMT1 modification. The segment covering 260–269 has biased composition (basic residues); sequence RGGRMLKHKR. The tract at residues 260–285 is disordered; the sequence is RGGRMLKHKRQRDDLEGRNDMGPSGD. An interaction with AKAP13 region spans residues 262-595; the sequence is GRMLKHKRQR…SEAESFPNTI (334 aa). The interval 264-595 is self-association; sequence MLKHKRQRDD…SEAESFPNTI (332 aa). In terms of domain architecture, NR LBD spans 311 to 547; the sequence is TADQMVSALL…DLLLEMLDAH (237 aa). The interval 311-595 is transactivation AF-2; that stretch reads TADQMVSALL…SEAESFPNTI (285 aa). Residues E353 and R394 each coordinate 17beta-estradiol. Residue C447 is the site of S-palmitoyl cysteine attachment. Residue H524 coordinates 17beta-estradiol. Y537 is modified (phosphotyrosine; by Tyr-kinases). Positions 554–578 are disordered; sequence SRMGVSPEEPSQSQLTTTNSTSSHS. Low complexity predominate over residues 564–578; the sequence is SQSQLTTTNSTSSHS. T571 carries an O-linked (GlcNAc) threonine glycan.

The protein belongs to the nuclear hormone receptor family. NR3 subfamily. Binds DNA as a homodimer. Can form a heterodimer with ESR2. Interacts with coactivator NCOA5. Interacts with PELP1, the interaction is enhanced by 17-beta-estradiol; the interaction increases ESR1 transcriptional activity. Interacts with NCOA7; the interaction is ligand-inducible. Interacts with AKAP13, CUEDC2, HEXIM1, KDM5A, MAP1S, SMARD1, and UBE1C. Interacts with MUC1; the interaction is stimulated by 7 beta-estradiol (E2) and enhances ESR1-mediated transcription. Interacts with DNTTIP2, and UIMC1. Interacts with KMT2D/MLL2. Interacts with ATAD2; the interaction is enhanced by estradiol. Interacts with KIF18A and LDB1. Interacts with RLIM (via its C-terminus). Interacts with MACROD1. Interacts with SH2D4A and PLCG. Interacts with SH2D4A; the interaction blocks binding to PLCG and inhibits estrogen-induced cell proliferation. Interacts with DYNLL1. Interacts with CCDC62; the interaction requires estradiol and appears to enhance the transcription of target genes. Interacts with NR2C1; the interaction prevents homodimerization of ESR1 and suppresses its transcriptional activity and cell growth. Interacts with DNAAF4. Interacts with PRMT2. Interacts with RBFOX2. Interacts with EP300; the interaction is estrogen-dependent and enhanced by CITED1. Interacts with CITED1; the interaction is estrogen-dependent. Interacts with FAM120B, FOXL2, PHB2 and SLC30A9. Interacts with coactivators NCOA3 and NCOA6. Interacts with STK3/MST2 only in the presence of SAV1 and vice-versa. Binds to CSNK1D. Interacts with NCOA2; NCOA2 can interact with ESR1 AF-1 and AF-2 domains simultaneously and mediate their transcriptional synergy. Interacts with DDX5. Interacts with NCOA1; the interaction seems to require a self-association of N-terminal and C-terminal regions. Interacts with ZNF366, DDX17, NFKB1, RELA, SP1 and SP3. Interacts with NRIP1. Interacts with GPER1; the interaction occurs in an estrogen-dependent manner. Interacts with CLOCK and the interaction is stimulated by estrogen. Interacts with TRIP4 (ufmylated); estrogen dependent. Interacts with LMTK3; the interaction phosphorylates ESR1 (in vitro) and protects it against proteasomal degradation. Interacts with CCAR2 (via N-terminus) in a ligand-independent manner. Interacts with ZFHX3. Interacts with SFR1 in a ligand-dependent and -independent manner. Interacts with DCAF13, LATS1 and DCAF1; regulates ESR1 ubiquitination and ubiquitin-mediated proteasomal degradation. Interacts (via DNA-binding domain) with POU4F2 (C-terminus); this interaction increases the estrogen receptor ESR1 transcriptional activity in a DNA- and ligand 17-beta-estradiol-independent manner. Interacts with ESRRB isoform 1. Interacts with UBE3A and WBP2. Interacts with GTF2B. Interacts with RBM39. In the absence of hormonal ligand, interacts with TACC1. Interacts with PI3KR1 or PI3KR2 and PTK2/FAK1. Interacts with SRC. Interacts with BAG1; the interaction is promoted in the absence of estradiol (17-beta-estradiol/E2). Interacts with and ubiquitinated by STUB1; the interaction is promoted in the absence of estradiol (17-beta-estradiol/E2). Interacts with NEDD8. Post-translationally, ubiquitinated; regulated by LATS1 via DCAF1 it leads to ESR1 proteasomal degradation. Deubiquitinated by OTUB1. Ubiquitinated by STUB1/CHIP; in the CA1 hippocampal region following loss of endogenous circulating estradiol (17-beta-estradiol/E2). Ubiquitinated by UBR5, leading to its degradation: UBR5 specifically recognizes and binds ligand-bound ESR1 when it is not associated with coactivators (NCOAs). In presence of NCOAs, the UBR5-degron is not accessible, preventing its ubiquitination and degradation. Phosphorylated by cyclin A/CDK2 and CK1. Phosphorylation probably enhances transcriptional activity. Dephosphorylation at Ser-118 by PPP5C inhibits its transactivation activity. Phosphorylated by LMTK3 (in vitro). In terms of processing, palmitoylated at Cys-447 by ZDHHC7 and ZDHHC21. Palmitoylation is required for plasma membrane targeting and for rapid intracellular signaling via ERK and AKT kinases and cAMP generation, but not for signaling mediated by the nuclear hormone receptor. Post-translationally, dimethylated by PRMT1 at Arg-260. The methylation may favor cytoplasmic localization. Demethylated by JMJD6 at Arg-260.

It localises to the nucleus. The protein localises to the cytoplasm. It is found in the golgi apparatus. The protein resides in the cell membrane. Its function is as follows. Nuclear hormone receptor. The steroid hormones and their receptors are involved in the regulation of eukaryotic gene expression and affect cellular proliferation and differentiation in target tissues. Ligand-dependent nuclear transactivation involves either direct homodimer binding to a palindromic estrogen response element (ERE) sequence or association with other DNA-binding transcription factors, such as AP-1/c-Jun, c-Fos, ATF-2, Sp1 and Sp3, to mediate ERE-independent signaling. Ligand binding induces a conformational change allowing subsequent or combinatorial association with multiprotein coactivator complexes through LXXLL motifs of their respective components. Mutual transrepression occurs between the estrogen receptor (ER) and NF-kappa-B in a cell-type specific manner. Decreases NF-kappa-B DNA-binding activity and inhibits NF-kappa-B-mediated transcription from the IL6 promoter and displace RELA/p65 and associated coregulators from the promoter. Recruited to the NF-kappa-B response element of the CCL2 and IL8 promoters and can displace CREBBP. Present with NF-kappa-B components RELA/p65 and NFKB1/p50 on ERE sequences. Can also act synergistically with NF-kappa-B to activate transcription involving respective recruitment adjacent response elements; the function involves CREBBP. Can activate the transcriptional activity of TFF1. Also mediates membrane-initiated estrogen signaling involving various kinase cascades. Essential for MTA1-mediated transcriptional regulation of BRCA1 and BCAS3. Maintains neuronal survival in response to ischemic reperfusion injury when in the presence of circulating estradiol (17-beta-estradiol/E2). In Mesocricetus auratus (Golden hamster), this protein is Estrogen receptor (ESR1).